Consider the following 582-residue polypeptide: Colicin-E9 (582 aa).

5 disordered regions span residues 1 to 74, 246 to 270, 294 to 321, 422 to 489, and 510 to 542; these read MSGG…SGGG, SPGV…NTRD, PDQV…EAAE, ADAA…IADK, and SKDP…QQVG. A compositionally biased stretch (gly residues) spans 20–35; sequence INGGPTGIGVSGGASD. Over residues 36 to 45 the composition is skewed to low complexity; sequence GSGWSSENNP. Positions 46 to 74 are enriched in gly residues; that stretch reads WGGGSGSGIHWGGGSGRGNGGGNGNSGGG. 3 stretches are compositionally biased toward basic and acidic residues: residues 297-321, 430-453, and 465-476; these read VKQR…EAAE, QERR…ESKR, and PVGDKWLDDAGK. The segment covering 516–529 has biased composition (low complexity); it reads SKNLNPSNKSSVSK. Zn(2+) contacts are provided by H550, H575, and H579.

The protein belongs to the colicin/pyosin nuclease family.

In terms of biological role, this plasmid-coded bactericidal protein is an endonuclease active on both single- and double-stranded DNA but with undefined specificity. Functionally, colicins are polypeptide toxins produced by and active against E.coli and closely related bacteria. This Escherichia coli protein is Colicin-E9 (col).